Here is a 388-residue protein sequence, read N- to C-terminus: Chorismate synthase (388 aa).

The NADP(+) site is built by arginine 39 and arginine 45. FMN-binding positions include 130-132 (RSS), 251-252 (NA), glycine 296, 311-315 (KPIPT), and arginine 337.

It belongs to the chorismate synthase family. In terms of assembly, homotetramer. The cofactor is FMNH2.

The enzyme catalyses 5-O-(1-carboxyvinyl)-3-phosphoshikimate = chorismate + phosphate. The protein operates within metabolic intermediate biosynthesis; chorismate biosynthesis; chorismate from D-erythrose 4-phosphate and phosphoenolpyruvate: step 7/7. Its function is as follows. Catalyzes the anti-1,4-elimination of the C-3 phosphate and the C-6 proR hydrogen from 5-enolpyruvylshikimate-3-phosphate (EPSP) to yield chorismate, which is the branch point compound that serves as the starting substrate for the three terminal pathways of aromatic amino acid biosynthesis. This reaction introduces a second double bond into the aromatic ring system. The chain is Chorismate synthase from Streptococcus pneumoniae (strain 70585).